A 428-amino-acid chain; its full sequence is Serine hydroxymethyltransferase (428 aa).

(6S)-5,6,7,8-tetrahydrofolate contacts are provided by residues L127 and G131–L133. N6-(pyridoxal phosphate)lysine is present on K236.

This sequence belongs to the SHMT family. As to quaternary structure, homodimer. Pyridoxal 5'-phosphate is required as a cofactor.

The protein resides in the cytoplasm. It carries out the reaction (6R)-5,10-methylene-5,6,7,8-tetrahydrofolate + glycine + H2O = (6S)-5,6,7,8-tetrahydrofolate + L-serine. It participates in one-carbon metabolism; tetrahydrofolate interconversion. It functions in the pathway amino-acid biosynthesis; glycine biosynthesis; glycine from L-serine: step 1/1. Functionally, catalyzes the reversible interconversion of serine and glycine with tetrahydrofolate (THF) serving as the one-carbon carrier. This reaction serves as the major source of one-carbon groups required for the biosynthesis of purines, thymidylate, methionine, and other important biomolecules. Also exhibits THF-independent aldolase activity toward beta-hydroxyamino acids, producing glycine and aldehydes, via a retro-aldol mechanism. In Tropheryma whipplei (strain TW08/27) (Whipple's bacillus), this protein is Serine hydroxymethyltransferase.